The chain runs to 420 residues: Glucose-1-phosphate adenylyltransferase (420 aa).

Residues Y107, G172, 187–188 (EK), and S205 contribute to the alpha-D-glucose 1-phosphate site.

Belongs to the bacterial/plant glucose-1-phosphate adenylyltransferase family. As to quaternary structure, homotetramer.

The catalysed reaction is alpha-D-glucose 1-phosphate + ATP + H(+) = ADP-alpha-D-glucose + diphosphate. It functions in the pathway glycan biosynthesis; glycogen biosynthesis. Functionally, involved in the biosynthesis of ADP-glucose, a building block required for the elongation reactions to produce glycogen. Catalyzes the reaction between ATP and alpha-D-glucose 1-phosphate (G1P) to produce pyrophosphate and ADP-Glc. The protein is Glucose-1-phosphate adenylyltransferase of Rhodopseudomonas palustris (strain BisB18).